The following is an 881-amino-acid chain: Phosphoenolpyruvate carboxylase (881 aa).

Active-site residues include His-138 and Lys-545.

This sequence belongs to the PEPCase type 1 family. Requires Mg(2+) as cofactor.

The catalysed reaction is oxaloacetate + phosphate = phosphoenolpyruvate + hydrogencarbonate. Its function is as follows. Forms oxaloacetate, a four-carbon dicarboxylic acid source for the tricarboxylic acid cycle. This chain is Phosphoenolpyruvate carboxylase, found in Shewanella oneidensis (strain ATCC 700550 / JCM 31522 / CIP 106686 / LMG 19005 / NCIMB 14063 / MR-1).